Consider the following 512-residue polypeptide: Proline--tRNA ligase (512 aa).

Residues 460-470 show a composition bias toward acidic residues; it reads SDEDDEQDTTD. The disordered stretch occupies residues 460-484; the sequence is SDEDDEQDTTDENMGVNNDTTVESN.

The protein belongs to the class-II aminoacyl-tRNA synthetase family. ProS type 3 subfamily. Homodimer.

The protein localises to the cytoplasm. The enzyme catalyses tRNA(Pro) + L-proline + ATP = L-prolyl-tRNA(Pro) + AMP + diphosphate. Functionally, catalyzes the attachment of proline to tRNA(Pro) in a two-step reaction: proline is first activated by ATP to form Pro-AMP and then transferred to the acceptor end of tRNA(Pro). This chain is Proline--tRNA ligase, found in Haloquadratum walsbyi (strain DSM 16790 / HBSQ001).